A 28-amino-acid polypeptide reads, in one-letter code: leu operon leader peptide (28 aa).

Its function is as follows. Involved in control of the biosynthesis of leucine. The chain is leu operon leader peptide (leuL) from Salmonella typhimurium (strain LT2 / SGSC1412 / ATCC 700720).